A 336-amino-acid polypeptide reads, in one-letter code: Tetraacyldisaccharide 4'-kinase (336 aa).

60-67 (TVGGTGKT) is an ATP binding site.

The protein belongs to the LpxK family.

It catalyses the reaction a lipid A disaccharide + ATP = a lipid IVA + ADP + H(+). It participates in glycolipid biosynthesis; lipid IV(A) biosynthesis; lipid IV(A) from (3R)-3-hydroxytetradecanoyl-[acyl-carrier-protein] and UDP-N-acetyl-alpha-D-glucosamine: step 6/6. Transfers the gamma-phosphate of ATP to the 4'-position of a tetraacyldisaccharide 1-phosphate intermediate (termed DS-1-P) to form tetraacyldisaccharide 1,4'-bis-phosphate (lipid IVA). This Pseudomonas fluorescens (strain SBW25) protein is Tetraacyldisaccharide 4'-kinase.